The following is a 410-amino-acid chain: D-amino acid dehydrogenase (410 aa).

9 to 14 (GGGIVG) lines the FAD pocket.

Belongs to the DadA oxidoreductase family. FAD serves as cofactor.

The protein localises to the cell inner membrane. It carries out the reaction a D-alpha-amino acid + a quinone + H2O = a 2-oxocarboxylate + a quinol + NH4(+). In terms of biological role, catalyzes the oxidative deamination of D-amino acids. Has broad substrate specificity; is mostly active on D-proline, and to a lesser extent, on several other D-amino acids such as D-alanine, D-phenylalanine and D-serine. Mediates electron transport from D-proline to coenzyme Q1 in vitro, and is involved in the electron transport chain from D-proline to the c-type cytochrome in vivo. The sequence is that of D-amino acid dehydrogenase from Helicobacter pylori (strain ATCC 700392 / 26695) (Campylobacter pylori).